The sequence spans 188 residues: ATP synthase subunit delta (188 aa).

This sequence belongs to the ATPase delta chain family. In terms of assembly, F-type ATPases have 2 components, F(1) - the catalytic core - and F(0) - the membrane proton channel. F(1) has five subunits: alpha(3), beta(3), gamma(1), delta(1), epsilon(1). F(0) has three main subunits: a(1), b(2) and c(10-14). The alpha and beta chains form an alternating ring which encloses part of the gamma chain. F(1) is attached to F(0) by a central stalk formed by the gamma and epsilon chains, while a peripheral stalk is formed by the delta and b chains.

It localises to the cell inner membrane. In terms of biological role, f(1)F(0) ATP synthase produces ATP from ADP in the presence of a proton or sodium gradient. F-type ATPases consist of two structural domains, F(1) containing the extramembraneous catalytic core and F(0) containing the membrane proton channel, linked together by a central stalk and a peripheral stalk. During catalysis, ATP synthesis in the catalytic domain of F(1) is coupled via a rotary mechanism of the central stalk subunits to proton translocation. This protein is part of the stalk that links CF(0) to CF(1). It either transmits conformational changes from CF(0) to CF(1) or is implicated in proton conduction. This is ATP synthase subunit delta from Sinorhizobium fredii (strain NBRC 101917 / NGR234).